A 314-amino-acid chain; its full sequence is L-lactate dehydrogenase 1 (314 aa).

Residues valine 16, aspartate 37, lysine 42, tyrosine 68, and 82 to 83 each bind NAD(+); that span reads GL. Residues glutamine 85, arginine 91, and 123 to 126 each bind substrate; that span reads NPVD. Residues 121–123 and serine 146 each bind NAD(+); that span reads ATN. Position 151 to 154 (151 to 154) interacts with substrate; the sequence is DSAR. Beta-D-fructose 1,6-bisphosphate is bound by residues arginine 156 and histidine 171. Histidine 178 acts as the Proton acceptor in catalysis. Tyrosine 223 is subject to Phosphotyrosine. Substrate is bound at residue threonine 232.

It belongs to the LDH/MDH superfamily. LDH family. As to quaternary structure, homotetramer.

The protein localises to the cytoplasm. It catalyses the reaction (S)-lactate + NAD(+) = pyruvate + NADH + H(+). It participates in fermentation; pyruvate fermentation to lactate; (S)-lactate from pyruvate: step 1/1. Allosterically activated by fructose 1,6-bisphosphate (FBP). Functionally, catalyzes the conversion of lactate to pyruvate. This is L-lactate dehydrogenase 1 from Bacillus cereus (strain ATCC 14579 / DSM 31 / CCUG 7414 / JCM 2152 / NBRC 15305 / NCIMB 9373 / NCTC 2599 / NRRL B-3711).